The following is a 479-amino-acid chain: Xylose isomerase (479 aa).

The active site involves H144. Mn(2+)-binding residues include E275, E311, H314, D339, D350, D352, and Y382.

The protein belongs to the xylose isomerase family. As to quaternary structure, homodimer. The cofactor is Mn(2+).

The enzyme catalyses alpha-D-xylose = alpha-D-xylulofuranose. In Hordeum vulgare (Barley), this protein is Xylose isomerase (XYLA).